We begin with the raw amino-acid sequence, 435 residues long: Actin-like protein 7A (435 aa).

2 disordered regions span residues 1 to 20 (MWAP…VGNQ) and 29 to 65 (QTAS…ERPK). The interval 31 to 51 (ASLRDGPAKRAVWVRRRSSEP) is required for interaction with TES. The segment covering 47–65 (RSSEPQEPTESKAAKERPK) has biased composition (basic and acidic residues).

This sequence belongs to the actin family. In terms of assembly, interacts (via N-terminus) with TES (via LIM domain 2). Heterodimer with TES; the heterodimer interacts with ENAH to form a heterotrimer. Interacts with ACTL9. Interacts with CYLC1; the interaction may be relevant for proper acrosome attachment to the nuclear envelope.

Its subcellular location is the cytoplasm. It is found in the cytoskeleton. The protein resides in the golgi apparatus. The protein localises to the nucleus. Essential for normal spermatogenesis and male fertility. Required for normal sperm head morphology, acroplaxome formation, acrosome attachment, and acrosome granule stability. May anchor and stabilize acrosomal adherence to the acroplaxome at least in part by facilitating the presence of F-actin in the subacrosomal space. May play an important role in formation and fusion of Golgi-derived vesicles during acrosome biogenesis. The polypeptide is Actin-like protein 7A (ACTL7A) (Macaca fascicularis (Crab-eating macaque)).